The chain runs to 246 residues: NAD-dependent protein deacylase (246 aa).

The 245-residue stretch at 1 to 245 (MKEFITKHRD…ELIREILDNP (245 aa)) folds into the Deacetylase sirtuin-type domain. Position 20 to 39 (20 to 39 (GAGISAESGIPTFRGSEGLW)) interacts with NAD(+). Residues Tyr64 and Arg67 each coordinate substrate. An NAD(+)-binding site is contributed by 98 to 101 (QNVD). The active-site Proton acceptor is the His116. Residues Cys124, Cys127, Cys146, and Cys149 each coordinate Zn(2+). NAD(+) is bound by residues 186-188 (GTS), 212-214 (NPE), and Thr230.

It belongs to the sirtuin family. Class III subfamily. Zn(2+) serves as cofactor.

The protein localises to the cytoplasm. It catalyses the reaction N(6)-acetyl-L-lysyl-[protein] + NAD(+) + H2O = 2''-O-acetyl-ADP-D-ribose + nicotinamide + L-lysyl-[protein]. The enzyme catalyses N(6)-succinyl-L-lysyl-[protein] + NAD(+) + H2O = 2''-O-succinyl-ADP-D-ribose + nicotinamide + L-lysyl-[protein]. Its function is as follows. NAD-dependent lysine deacetylase and desuccinylase that specifically removes acetyl and succinyl groups on target proteins. Modulates the activities of several proteins which are inactive in their acylated form. In Leptospira interrogans serogroup Icterohaemorrhagiae serovar copenhageni (strain Fiocruz L1-130), this protein is NAD-dependent protein deacylase.